The primary structure comprises 487 residues: MVPVIALVGRPNVGKSTMFNRLTKTRDAIVGDLSGLTRDRQYGDASWQGRSFILIDTGGITGDEVGMDEKMAEQSLMAIEEADYVLFLVDARAGMTAADQMIAEHLRKRNKAAILVANKIDNIDPDVARAEFSPMGMGNAIPVAGSQGRGINALMEAVLGHLPRDAEEEALEQDVAEGEEAVRIPGPSEKDGIKIAIIGRPNVGKSTLVNRMLGEERVVVYDEPGTTRDSIYIPFERDGEKYTFIDTAGVRKRGKIHEEVEKFSVVKTLQAIKDANVVIFVMDAREGVVDHDLNLLGFALEAGRAIVIALNKWDGMEPGERAYVKTELERRLFFVDFADIHFISALHGTGVGNLYKSVQAAFQSAVTRWPTSRLTQILEDAVSEHQPPMVNGRRIKLRYAHLGGANPPLIVIHGNQTDSIPKSYSRYLENTYRRVLKLVGTPIRIEYKGGENPYEGKKNTLTDRQVNKKRRLMSHHKKAEKKRRDKR.

EngA-type G domains lie at 3-166 (PVIA…PRDA) and 193-366 (IKIA…QSAV). GTP is bound by residues 9–16 (GRPNVGKS), 56–60 (DTGGI), 118–121 (NKID), 199–206 (GRPNVGKS), 246–250 (DTAGV), and 311–314 (NKWD). Residues 367 to 451 (TRWPTSRLTQ…PIRIEYKGGE (85 aa)) form the KH-like domain. The segment covering 448–461 (KGGENPYEGKKNTL) has biased composition (basic and acidic residues). The interval 448 to 487 (KGGENPYEGKKNTLTDRQVNKKRRLMSHHKKAEKKRRDKR) is disordered. Positions 467–487 (NKKRRLMSHHKKAEKKRRDKR) are enriched in basic residues.

Belongs to the TRAFAC class TrmE-Era-EngA-EngB-Septin-like GTPase superfamily. EngA (Der) GTPase family. In terms of assembly, associates with the 50S ribosomal subunit.

GTPase that plays an essential role in the late steps of ribosome biogenesis. The chain is GTPase Der from Pseudomonas putida (strain ATCC 47054 / DSM 6125 / CFBP 8728 / NCIMB 11950 / KT2440).